Here is a 589-residue protein sequence, read N- to C-terminus: Phenylalanine--tRNA ligase beta subunit (589 aa).

The region spanning 302 to 379 is the B5 domain; the sequence is LAYRKEMVRA…IAYGYSNIQM (78 aa). Residues D357, D363, E366, and D367 each contribute to the Mg(2+) site.

Belongs to the phenylalanyl-tRNA synthetase beta subunit family. Type 2 subfamily. As to quaternary structure, heterotetramer; dimer of two heterodimers formed by FARSA and FARSB. The cofactor is Mg(2+).

It is found in the cytoplasm. The catalysed reaction is tRNA(Phe) + L-phenylalanine + ATP = L-phenylalanyl-tRNA(Phe) + AMP + diphosphate + H(+). The protein is Phenylalanine--tRNA ligase beta subunit (FARSB) of Pongo abelii (Sumatran orangutan).